A 349-amino-acid chain; its full sequence is tRNA pseudouridine synthase D (349 aa).

Residues 1–22 (MTDAPLVTAELPGSGGSLRRSP) form a disordered region. D78 serves as the catalytic Nucleophile. The region spanning 150–304 (GLPNLFGPQR…AEGTRRAARL (155 aa)) is the TRUD domain.

It belongs to the pseudouridine synthase TruD family.

It carries out the reaction uridine(13) in tRNA = pseudouridine(13) in tRNA. Functionally, responsible for synthesis of pseudouridine from uracil-13 in transfer RNAs. This is tRNA pseudouridine synthase D from Anaeromyxobacter sp. (strain Fw109-5).